The primary structure comprises 320 residues: Olfactory receptor 13C8 (320 aa).

Topologically, residues 1-25 (MERTNDSTSTEFFLVGLSAHPKLQT) are extracellular. A glycan (N-linked (GlcNAc...) asparagine) is linked at Asn5. The helical transmembrane segment at 26–46 (VFFVLILWMYLMILLGNGVLI) threads the bilayer. Topologically, residues 47-54 (SVIIFDSH) are cytoplasmic. Residues 55 to 75 (LHTPMYFFLCNLSFLDVCYTS) traverse the membrane as a helical segment. At 76–99 (SSVPLILASFLAVKKKVSFSGCMV) the chain is on the extracellular side. Cys97 and Cys189 are disulfide-bonded. A helical transmembrane segment spans residues 100-120 (QMFISFAMGATECMILGTMAL). Residues 121-139 (DRYVAICYPLRYPVIMSKG) are Cytoplasmic-facing. Residues 140 to 160 (AYVAMAAGSWVTGLVDSVVQT) traverse the membrane as a helical segment. At 161–197 (AFAMQLPFCANNVIKHFVCEILAILKLACADISINVI) the chain is on the extracellular side. Residues 198–217 (SMTGSNLIVLVIPLLVISIS) form a helical membrane-spanning segment. Topologically, residues 218–237 (YIFIVATILRIPSTEGKHKA) are cytoplasmic. A helical transmembrane segment spans residues 238 to 258 (FSTCSAHLTVVIIFYGTIFFM). Residues 259–277 (YAKPESKASVDSGNEDIIE) lie on the Extracellular side of the membrane. The chain crosses the membrane as a helical span at residues 278-298 (ALISLFYGVMTPMLNPLIYSL). Residues 299–320 (RNKDVKAAVKNILCRKNFSDGK) lie on the Cytoplasmic side of the membrane.

This sequence belongs to the G-protein coupled receptor 1 family.

The protein resides in the cell membrane. Odorant receptor. The chain is Olfactory receptor 13C8 (OR13C8) from Homo sapiens (Human).